We begin with the raw amino-acid sequence, 122 residues long: Seripauperin-5 (122 aa).

Residues 7–24 (IAAGVAAIAAGASAAATT) form a helical membrane-spanning segment.

It belongs to the SRP1/TIP1 family. Seripauperin subfamily.

It is found in the membrane. In Saccharomyces cerevisiae (strain ATCC 204508 / S288c) (Baker's yeast), this protein is Seripauperin-5 (PAU5).